The sequence spans 323 residues: Glyoxylate/hydroxypyruvate reductase B (323 aa).

A disordered region spans residues 37-62; the sequence is AEHGGAGARRRHDRLQQHGGSSAAGE. Residues Arg-236 and Glu-265 contribute to the active site. His-284 functions as the Proton donor in the catalytic mechanism.

The protein belongs to the D-isomer specific 2-hydroxyacid dehydrogenase family. GhrB subfamily. Homodimer.

The protein localises to the cytoplasm. The catalysed reaction is glycolate + NADP(+) = glyoxylate + NADPH + H(+). It carries out the reaction (R)-glycerate + NAD(+) = 3-hydroxypyruvate + NADH + H(+). The enzyme catalyses (R)-glycerate + NADP(+) = 3-hydroxypyruvate + NADPH + H(+). Catalyzes the NADPH-dependent reduction of glyoxylate and hydroxypyruvate into glycolate and glycerate, respectively. This Enterobacter agglomerans (Erwinia herbicola) protein is Glyoxylate/hydroxypyruvate reductase B (tkrA).